The sequence spans 118 residues: Cell division protein FtsB (118 aa).

The Cytoplasmic portion of the chain corresponds to 1 to 6 (MRNWRW). A helical transmembrane segment spans residues 7 to 24 (LLLVLAALLAWLQHRFWF). At 25–118 (GPGNSGEVRM…DLSQPRREKR (94 aa)) the chain is on the periplasmic side. The stretch at 30–66 (GEVRMLQVQIVQQHQENERLRQRNASLAAEVKNLKDG) forms a coiled coil. The disordered stretch occupies residues 98-118 (LPNDTSADHGVDLSQPRREKR). Positions 103–118 (SADHGVDLSQPRREKR) are enriched in basic and acidic residues.

It belongs to the FtsB family. Part of a complex composed of FtsB, FtsL and FtsQ.

The protein resides in the cell inner membrane. Functionally, essential cell division protein. May link together the upstream cell division proteins, which are predominantly cytoplasmic, with the downstream cell division proteins, which are predominantly periplasmic. The polypeptide is Cell division protein FtsB (Xylella fastidiosa (strain M12)).